A 464-amino-acid polypeptide reads, in one-letter code: Non-neuronal cytoplasmic intermediate filament protein (464 aa).

Over residues Met1–Thr14 the composition is skewed to polar residues. Residues Met1–Ser59 form a disordered region. The tract at residues Met1 to Glu101 is head. The span at Ser17–Arg27 shows a compositional bias: gly residues. Low complexity predominate over residues Ala45 to Ser59. Positions Glu98 to Leu413 constitute an IF rod domain. The segment at Leu102 to Gln133 is coil 1A. The linker 1 stretch occupies residues Glu134 to Leu144. The coil 1B stretch occupies residues Tyr145 to Ile237. The segment at Arg238–Gly264 is linker 2. Residues Pro265 to Leu413 form a coil 2 region. The tail stretch occupies residues Phe414–Lys464. The interval Gly415–Lys464 is disordered. Low complexity predominate over residues Gly420–Ser438. A compositionally biased stretch (gly residues) spans Gly439–Ser448. Residues Ser449–Lys464 show a composition bias toward low complexity.

It belongs to the intermediate filament family. In terms of assembly, can form homopolymers.

The protein resides in the cytoplasm. This chain is Non-neuronal cytoplasmic intermediate filament protein, found in Branchiostoma lanceolatum (Common lancelet).